The following is a 52-amino-acid chain: Ornatin-C (52 aa).

Residues 42–44 (RGD) carry the Cell attachment site motif.

This sequence belongs to the ornatin family.

The protein localises to the secreted. Its function is as follows. Potent inhibitor of fibrinogen interaction with platelet receptors expressed on glycoprotein IIb-IIIa complex. May prevent blood from clotting during either feeding and/or storage of ingested blood. This is Ornatin-C from Placobdella ornata (Turtle leech).